Consider the following 154-residue polypeptide: Nitrogen regulatory protein (154 aa).

Positions 6-150 (QILTPGRSLV…EALYQIVVDV (145 aa)) constitute a PTS EIIA type-2 domain. Histidine 68 serves as the catalytic Tele-phosphohistidine intermediate.

Its subcellular location is the cytoplasm. In terms of biological role, seems to have a role in regulating nitrogen assimilation. The chain is Nitrogen regulatory protein (ptsN) from Pseudomonas aeruginosa (strain ATCC 15692 / DSM 22644 / CIP 104116 / JCM 14847 / LMG 12228 / 1C / PRS 101 / PAO1).